Here is a 105-residue protein sequence, read N- to C-terminus: MTKSELISKLAERFPQLLAKDAELVVKIILDAMAKSLSRGERIEIRGFGSFDLNYRPSRVGRNPKSGEKVHVPEKYVPHFKAGKKMRELIDSGPKQHKVLDRVTG.

This sequence belongs to the bacterial histone-like protein family. As to quaternary structure, heterodimer of an alpha and a beta chain.

Functionally, this protein is one of the two subunits of integration host factor, a specific DNA-binding protein that functions in genetic recombination as well as in transcriptional and translational control. This chain is Integration host factor subunit beta, found in Nitrosomonas europaea (strain ATCC 19718 / CIP 103999 / KCTC 2705 / NBRC 14298).